The sequence spans 434 residues: Arrestin domain-containing protein 1 (434 aa).

The tract at residues Ser292–Ser349 is disordered. Polar residues predominate over residues Val330 to Leu343. 2 short sequence motifs (PPxY motif) span residues Pro401–Tyr404 and Pro414–Tyr417.

It belongs to the arrestin family. Interacts (via PPxY motifs) with ITCH (via WW domains); the interaction is direct and participates in the recruitment of the ubiquitin-protein ligase ITCH to the NOTCH1 receptor. Interacts with ARRB1 and ARRB2; the interaction is direct. Interacts with TSG101; may recruit TSG101 to the plasma membrane. Interacts (via PPxY motifs) with WWP2 (via WW domains); ubiquitinates ARRDC1. Interacts with SLC11A2; controls the incorporation of SLC11A2 into extracellular vesicles through an ubiquitination-dependent mechanism. Interacts with WWP1 (via WW domains). Interacts with NEDD4 (via WW domains). Interacts with PDCD6IP. In terms of processing, ubiquitinated. Ubiquitination by WWP2; promotes localization to extracellular microvesicles. Ubiquitinated by WWP1.

It is found in the cell membrane. Functions as an adapter recruiting ubiquitin-protein ligases to their specific substrates. Through an ubiquitination-dependent mechanism plays for instance a role in the incorporation of SLC11A2 into extracellular vesicles. More generally, plays a role in the extracellular transport of proteins between cells through the release in the extracellular space of microvesicles. By participating to the ITCH-mediated ubiquitination and subsequent degradation of NOTCH1, negatively regulates the NOTCH signaling pathway. The protein is Arrestin domain-containing protein 1 of Mus musculus (Mouse).